The following is an 833-amino-acid chain: Leucine--tRNA ligase (833 aa).

Residues 41–52 carry the 'HIGH' region motif; the sequence is PYPSGAGLHVGH. The short motif at 610–614 is the 'KMSKS' region element; sequence KMSKS. ATP is bound at residue lysine 613.

Belongs to the class-I aminoacyl-tRNA synthetase family.

It is found in the cytoplasm. It catalyses the reaction tRNA(Leu) + L-leucine + ATP = L-leucyl-tRNA(Leu) + AMP + diphosphate. This chain is Leucine--tRNA ligase, found in Streptococcus thermophilus (strain CNRZ 1066).